A 370-amino-acid polypeptide reads, in one-letter code: Glycerophosphodiester phosphodiesterase GDPD3 (370 aa).

One can recognise a GP-PDE domain in the interval 35–322 (FVLMGHRGFG…DMVKDISEAI (288 aa)).

Belongs to the glycerophosphoryl diester phosphodiesterase family. In terms of tissue distribution, expressed in flowers and siliques.

The enzyme catalyses a sn-glycero-3-phosphodiester + H2O = an alcohol + sn-glycerol 3-phosphate + H(+). The polypeptide is Glycerophosphodiester phosphodiesterase GDPD3 (Arabidopsis thaliana (Mouse-ear cress)).